Here is a 123-residue protein sequence, read N- to C-terminus: Large ribosomal subunit protein uL29 (123 aa).

This sequence belongs to the universal ribosomal protein uL29 family. In terms of assembly, component of the large ribosomal subunit.

The protein localises to the cytoplasm. Functionally, component of the large ribosomal subunit. The ribosome is a large ribonucleoprotein complex responsible for the synthesis of proteins in the cell. In Hippocampus comes (Tiger tail seahorse), this protein is Large ribosomal subunit protein uL29 (rpl35).